We begin with the raw amino-acid sequence, 1616 residues long: Protein P200 (1616 aa).

6 disordered regions span residues methionine 1 to glutamate 41, histidine 878 to phenylalanine 909, glutamine 931 to asparagine 975, aspartate 1004 to aspartate 1083, phenylalanine 1100 to glutamate 1132, and isoleucine 1159 to glutamate 1433. Residues glutamate 891–glutamate 1389 form a 2 X 26 AA repeats region. The segment covering glutamate 938–proline 952 has biased composition (low complexity). Basic and acidic residues-rich tracts occupy residues glutamine 1012–glutamine 1029 and valine 1059–proline 1081. A run of 2 repeats spans residues glutamate 1161–glutamate 1186 and glutamate 1205–glutamate 1236. Polar residues-rich tracts occupy residues valine 1200 to glutamine 1227 and glutamate 1242 to histidine 1251. Residues glutamate 1205–glutamate 1389 are 2 X 32 AA repeats. Residues alanine 1256 to tyrosine 1270 are compositionally biased toward acidic residues. Residues serine 1276–glutamate 1285 are compositionally biased toward polar residues. A compositionally biased stretch (acidic residues) spans tyrosine 1288–tyrosine 1302. The segment covering serine 1309–glutamate 1323 has biased composition (low complexity). Tandem repeats lie at residues glutamate 1310 to glutamate 1339 and glutamate 1358 to glutamate 1389. Residues valine 1353–glutamine 1380 show a composition bias toward polar residues. The segment covering glutamine 1392–proline 1406 has biased composition (low complexity). The span at valine 1416–glutamate 1433 shows a compositional bias: acidic residues.

Could be an accessory structural component in cytadherence. The sequence is that of Protein P200 from Mycoplasma genitalium (strain ATCC 33530 / DSM 19775 / NCTC 10195 / G37) (Mycoplasmoides genitalium).